A 433-amino-acid chain; its full sequence is Tol-Pal system protein TolB (433 aa).

An N-terminal signal peptide occupies residues Met-1–Ala-21.

Belongs to the TolB family. The Tol-Pal system is composed of five core proteins: the inner membrane proteins TolA, TolQ and TolR, the periplasmic protein TolB and the outer membrane protein Pal. They form a network linking the inner and outer membranes and the peptidoglycan layer.

It is found in the periplasm. Its function is as follows. Part of the Tol-Pal system, which plays a role in outer membrane invagination during cell division and is important for maintaining outer membrane integrity. This Pseudomonas syringae pv. syringae (strain B728a) protein is Tol-Pal system protein TolB.